The primary structure comprises 254 residues: Sec-independent protein translocase protein TatCy (254 aa).

Transmembrane regions (helical) follow at residues 24–44, 67–87, 112–132, 157–177, 187–207, and 212–232; these read IVALAFVVFFIAGFFLAKPII, LYVFMQFAFIIGIVLTSPVIL, VSILLFLAGLSFSYYILFPFV, FLLQLTIPFGLLFQMPVILMF, MFLAKIRKYAYFTLLVIAALI, and LLSHMMVTVPLLILYEISILI.

This sequence belongs to the TatC family. In terms of assembly, forms a complex with TatAy. Two types of complexes exist: one composed of TatAy and TatCy, and another composed only of TatAy.

Its subcellular location is the cell membrane. Functionally, part of the twin-arginine translocation (Tat) system that transports large folded proteins containing a characteristic twin-arginine motif in their signal peptide across membranes. Required for YwbN secretion. This is Sec-independent protein translocase protein TatCy from Bacillus subtilis (strain 168).